The chain runs to 429 residues: Adenylosuccinate synthetase (429 aa).

Residues 12-18 (GDEGKGK) and 40-42 (GHT) each bind GTP. Aspartate 13 (proton acceptor) is an active-site residue. 2 residues coordinate Mg(2+): aspartate 13 and glycine 40. IMP is bound by residues 13 to 16 (DEGK), 38 to 41 (NAGH), threonine 129, arginine 143, glutamine 223, threonine 238, and arginine 302. Histidine 41 functions as the Proton donor in the catalytic mechanism. 298-304 (TVTGRKR) contacts substrate. Residues arginine 304, 330 to 332 (KLD), and 412 to 414 (STS) each bind GTP.

This sequence belongs to the adenylosuccinate synthetase family. In terms of assembly, homodimer. The cofactor is Mg(2+).

The protein localises to the cytoplasm. It catalyses the reaction IMP + L-aspartate + GTP = N(6)-(1,2-dicarboxyethyl)-AMP + GDP + phosphate + 2 H(+). Its pathway is purine metabolism; AMP biosynthesis via de novo pathway; AMP from IMP: step 1/2. Functionally, plays an important role in the de novo pathway of purine nucleotide biosynthesis. Catalyzes the first committed step in the biosynthesis of AMP from IMP. This is Adenylosuccinate synthetase from Rhizorhabdus wittichii (strain DSM 6014 / CCUG 31198 / JCM 15750 / NBRC 105917 / EY 4224 / RW1) (Sphingomonas wittichii).